The following is a 59-amino-acid chain: MAVPKKRTSMSKKRIRKNLWKKKTYFSIVQSYSLAKSRSFSGVSEHPKPKGFSRQQTNK.

Positions 36 to 59 are disordered; the sequence is KSRSFSGVSEHPKPKGFSRQQTNK.

It belongs to the bacterial ribosomal protein bL32 family.

It localises to the plastid. The protein resides in the chloroplast. In Oryza nivara (Indian wild rice), this protein is Large ribosomal subunit protein bL32c.